The primary structure comprises 476 residues: Elongation factor Tu, chloroplastic (476 aa).

The transit peptide at 1–67 (MAISAPAACS…QSTRRSFTVR (67 aa)) directs the protein to the chloroplast. Residues 77-281 (KPHVNIGTIG…AVDDYIPIPQ (205 aa)) enclose the tr-type G domain. The tract at residues 86-93 (GHVDHGKT) is G1. 86 to 93 (GHVDHGKT) provides a ligand contact to GTP. Threonine 94 is modified (phosphothreonine). Positions 127 to 131 (GITIN) are G2. Positions 148–151 (DCPG) are G3. Residues 148-152 (DCPGH) and 203-206 (NKED) contribute to the GTP site. Positions 203-206 (NKED) are G4. The segment at 241 to 243 (SAL) is G5.

It belongs to the TRAFAC class translation factor GTPase superfamily. Classic translation factor GTPase family. EF-Tu/EF-1A subfamily. In terms of assembly, interacts with PI5K2. Interacts with APD2.

The protein localises to the plastid. The protein resides in the chloroplast. In terms of biological role, this protein promotes the GTP-dependent binding of aminoacyl-tRNA to the A-site of ribosomes during protein biosynthesis. This is Elongation factor Tu, chloroplastic (TUFA) from Arabidopsis thaliana (Mouse-ear cress).